Consider the following 468-residue polypeptide: FAD-linked oxidoreductase azaG (468 aa).

The signal sequence occupies residues 1–16; it reads MQLSGILSWLLSWLWA. An N-linked (GlcNAc...) asparagine glycan is attached at Asn44. The 175-residue stretch at 54 to 228 folds into the FAD-binding PCMH-type domain; that stretch reads TVHGAPHYLG…TSATYRTHQA (175 aa). Asn272, Asn348, and Asn464 each carry an N-linked (GlcNAc...) asparagine glycan.

It belongs to the oxygen-dependent FAD-linked oxidoreductase family. FAD serves as cofactor.

It functions in the pathway secondary metabolite biosynthesis. Its function is as follows. FAD-linked oxidoreductase; part of the gene cluster that mediates the biosynthesis of azaphilones, a class of fungal metabolites characterized by a highly oxygenated pyrano-quinone bicyclic core and exhibiting a broad range of bioactivities. In the first step, the non-reducing polyketide synthase azaA forms the hexaketide precursor from successive condensations of five malonyl-CoA units, presumably with a simple acetyl-CoA starter unit. The reactive polyketide chain then undergoes a PT-mediated C2-C7 cyclization to afford the aromatic ring and is eventually released as an aldehyde through the R-domain. The putative ketoreductase azaE is proposed to catalyze the reduction of the terminal ketone resulting in the early culture product FK17-P2a. The monooxygenase azaH was demonstrated to be the only enzyme required to convert FK17-P2a to azanigerone E. AzaH first hydroxylates the benzaldehyde intermediate FK17-P2a at C4, which triggers the formation of the pyran-ring to afford azanigerone E. In parallel, the 2,4-dimethylhexanoyl chain is synthesized by the HR-PKS azaB and is proposed to be transferred to the C4-hydroxyl of azanigerone E by the acyltransferase azaD directly from the ACP domain of azaB. Alternatively, the 2,4-dimethyl-hexanoyl chain may be offloaded from the HR-PKS as a carboxylic acid and converted to an acyl-CoA by azaF. The resulting acyl-CoA molecule could then be taken up as a substrate by AzaD to form azanigerone B. To yield the carboxylic acid substituent in azanigerone A, the hydroxypropyl side chain of azanigerone B would need to undergo a C-C oxidative cleavage catalyzed by cytochrome P450 AzaI. AzaI is proposed to act on a vicinal diol that leads to a C-C bond scission either through an alkoxyradical intermediate or a peroxy complex. In the biosynthesis of azanigerone A, azanigerone B first undergoes hydroxylation at C10, possibly catalyzed by one of the two FAD-dependent monooxygenases encoded in the cluster, azaG or azaL, resulting in the vicinal diol azanigerone C. Oxidative cleavage of azanigerone C by azaI would yield the corresponding aldehyde derivative of azanigerone A. Finally, the dehydrogenase azaJ is proposed to convert the aldehyde functional group into the carboxylic acid, completing the conversion from azanigerone B to azanigerone A. Alternatively, the oxidation of aldehyde to carboxylic acid may be catalyzed by the same P450 enzyme azaI via consecutive oxidation or by endogenous alcohol dehydrogenase. The polypeptide is FAD-linked oxidoreductase azaG (Aspergillus niger (strain ATCC 1015 / CBS 113.46 / FGSC A1144 / LSHB Ac4 / NCTC 3858a / NRRL 328 / USDA 3528.7)).